The primary structure comprises 342 residues: N-acetyl-gamma-glutamyl-phosphate reductase (342 aa).

Cys147 is an active-site residue.

Belongs to the NAGSA dehydrogenase family. Type 1 subfamily.

It is found in the cytoplasm. It catalyses the reaction N-acetyl-L-glutamate 5-semialdehyde + phosphate + NADP(+) = N-acetyl-L-glutamyl 5-phosphate + NADPH + H(+). The protein operates within amino-acid biosynthesis; L-arginine biosynthesis; N(2)-acetyl-L-ornithine from L-glutamate: step 3/4. In terms of biological role, catalyzes the NADPH-dependent reduction of N-acetyl-5-glutamyl phosphate to yield N-acetyl-L-glutamate 5-semialdehyde. The chain is N-acetyl-gamma-glutamyl-phosphate reductase from Methanosphaera stadtmanae (strain ATCC 43021 / DSM 3091 / JCM 11832 / MCB-3).